The primary structure comprises 85 residues: Small ribosomal subunit protein uS17 (85 aa).

This sequence belongs to the universal ribosomal protein uS17 family. In terms of assembly, part of the 30S ribosomal subunit.

One of the primary rRNA binding proteins, it binds specifically to the 5'-end of 16S ribosomal RNA. The chain is Small ribosomal subunit protein uS17 from Anaeromyxobacter sp. (strain Fw109-5).